The primary structure comprises 78 residues: Conotoxin Cal6.3a (78 aa).

Residues 1 to 21 form the signal peptide; sequence MRFLHFLIVAVLLASFMESGA. The propeptide occupies 22–26; the sequence is MPRNP. 3 disulfides stabilise this stretch: Cys-38–Cys-49, Cys-41–Cys-53, and Cys-48–Cys-56. Gln-76 is modified (glutamine amide).

In terms of tissue distribution, expressed by the venom duct.

Its subcellular location is the secreted. In terms of biological role, probable neurotoxin with unknown target. Possibly targets ion channels. The polypeptide is Conotoxin Cal6.3a (Californiconus californicus (California cone)).